Reading from the N-terminus, the 366-residue chain is UDP-N-acetylglucosamine 2-epimerase (366 aa).

His207 is a catalytic residue.

It belongs to the UDP-N-acetylglucosamine 2-epimerase family. In terms of assembly, homodimer.

It is found in the cytoplasm. The enzyme catalyses UDP-N-acetyl-alpha-D-glucosamine = UDP-N-acetyl-alpha-D-mannosamine. Its function is as follows. Catalyzes the reversible epimerization at C-2 of UDP-N-acetylglucosamine (UDP-GlcNAc) to produce UDP-N-acetylmannosamine (UDP-ManNAc), the activated donor of ManNAc residues. The protein is UDP-N-acetylglucosamine 2-epimerase (wecB) of Methanocaldococcus jannaschii (strain ATCC 43067 / DSM 2661 / JAL-1 / JCM 10045 / NBRC 100440) (Methanococcus jannaschii).